Here is a 179-residue protein sequence, read N- to C-terminus: Monothiol glutaredoxin-S12, chloroplastic (179 aa).

The N-terminal 61 residues, 1-61 (MVAATVNLAN…WPPLRCSSVK (61 aa)), are a transit peptide targeting the chloroplast. At Ala-62 the chain carries N-acetylalanine. A Glutaredoxin domain is found at 75–176 (EETVKTTVAE…AILAEANGKN (102 aa)). Residue Cys-95 participates in [2Fe-2S] cluster binding.

This sequence belongs to the glutaredoxin family. CPYC subfamily.

The protein resides in the plastid. Its subcellular location is the chloroplast. Functionally, may only reduce GSH-thiol disulfides, but not protein disulfides. In Arabidopsis thaliana (Mouse-ear cress), this protein is Monothiol glutaredoxin-S12, chloroplastic (GRXS12).